The sequence spans 513 residues: Putative ribose/galactose/methyl galactoside import ATP-binding protein (513 aa).

ABC transporter domains lie at 24–260 and 270–510; these read LSAE…VGRE and VPIG…VMEL. ATP is bound at residue 56–63; sequence GENGAGKS.

Belongs to the ABC transporter superfamily. Carbohydrate importer 2 (CUT2) (TC 3.A.1.2) family.

The protein resides in the cell inner membrane. The enzyme catalyses D-ribose(out) + ATP + H2O = D-ribose(in) + ADP + phosphate + H(+). It carries out the reaction D-galactose(out) + ATP + H2O = D-galactose(in) + ADP + phosphate + H(+). Part of an ABC transporter complex involved in carbohydrate import. Could be involved in ribose, galactose and/or methyl galactoside import. Responsible for energy coupling to the transport system. The protein is Putative ribose/galactose/methyl galactoside import ATP-binding protein of Rhizobium johnstonii (strain DSM 114642 / LMG 32736 / 3841) (Rhizobium leguminosarum bv. viciae).